A 462-amino-acid chain; its full sequence is Fumarate hydratase class II (462 aa).

Residues 97-99, 127-130, 137-139, and Thr185 each bind substrate; these read SGT, HPND, and SSN. The Proton donor/acceptor role is filled by His186. The active site involves Ser316. Residues Ser317 and 322 to 324 contribute to the substrate site; that span reads KVN.

The protein belongs to the class-II fumarase/aspartase family. Fumarase subfamily. As to quaternary structure, homotetramer.

The protein localises to the cytoplasm. It carries out the reaction (S)-malate = fumarate + H2O. It functions in the pathway carbohydrate metabolism; tricarboxylic acid cycle; (S)-malate from fumarate: step 1/1. Its function is as follows. Involved in the TCA cycle. Catalyzes the stereospecific interconversion of fumarate to L-malate. In Bacillus subtilis (strain 168), this protein is Fumarate hydratase class II.